The sequence spans 146 residues: Large ribosomal subunit protein uL15 (146 aa).

The tract at residues 1–57 (MDLSNLKAAEGSVHSDNFRRGRGHGSGNGKTAGKGHKGQKARSGAPRPGFEGGQMPL) is disordered.

Belongs to the universal ribosomal protein uL15 family. Part of the 50S ribosomal subunit.

Its function is as follows. Binds to the 23S rRNA. The sequence is that of Large ribosomal subunit protein uL15 from Agathobacter rectalis (strain ATCC 33656 / DSM 3377 / JCM 17463 / KCTC 5835 / VPI 0990) (Eubacterium rectale).